Here is a 508-residue protein sequence, read N- to C-terminus: Cytochrome P450 monooxygenase orf4 (508 aa).

Position 447 (Cys-447) interacts with heme.

The protein belongs to the cytochrome P450 family. The cofactor is heme.

It participates in mycotoxin biosynthesis. Cytochrome P450 monooxygenase; part of the gene cluster that mediates the biosynthesis of brefeldin A (BFA), a protein transport inhibitor that shows antiviral, antifungal, and antitumor properties. The proposed biosynthesis of BFA involves formation of an acyclic polyketide chain that is differentially tailored throughout the backbone. The highly reducing polyketide synthase Bref-PKS is proposed to synthesize the precisely reduced octaketide precursor, which could then be directly offloaded by the thiohydrolase enzyme Bref-TH followed by a cytochrome P450 monooxygenase-mediated formation of the cyclopentane ring and macrocyclization to afford 7-deoxy BFA. Alternatively, the first ring annulation can also occur on the ACP-tethered intermediate before the thiohydrolase release and lactonization. The C7-hydroxylation by another cytochrome P450 monooxygenase is believed to be the final step in the process to obtain the final structure of BFA. In addition to the HRPKS Bref-PKS and the thiohydrolase Bref-TH, the brefeldin A biosynthesis cluster contains 4 cytochrome p450 monooxygenases (called orf3 to orf6), as well a the probable cluster-specific transcription regulator orf8. This Eupenicillium brefeldianum (Penicillium brefeldianum) protein is Cytochrome P450 monooxygenase orf4.